Consider the following 190-residue polypeptide: Crossover junction endodeoxyribonuclease RuvC (190 aa).

Residues D8, E67, and D139 contribute to the active site. Positions 8, 67, and 139 each coordinate Mg(2+).

It belongs to the RuvC family. Homodimer which binds Holliday junction (HJ) DNA. The HJ becomes 2-fold symmetrical on binding to RuvC with unstacked arms; it has a different conformation from HJ DNA in complex with RuvA. In the full resolvosome a probable DNA-RuvA(4)-RuvB(12)-RuvC(2) complex forms which resolves the HJ. Mg(2+) is required as a cofactor.

Its subcellular location is the cytoplasm. The catalysed reaction is Endonucleolytic cleavage at a junction such as a reciprocal single-stranded crossover between two homologous DNA duplexes (Holliday junction).. Functionally, the RuvA-RuvB-RuvC complex processes Holliday junction (HJ) DNA during genetic recombination and DNA repair. Endonuclease that resolves HJ intermediates. Cleaves cruciform DNA by making single-stranded nicks across the HJ at symmetrical positions within the homologous arms, yielding a 5'-phosphate and a 3'-hydroxyl group; requires a central core of homology in the junction. The consensus cleavage sequence is 5'-(A/T)TT(C/G)-3'. Cleavage occurs on the 3'-side of the TT dinucleotide at the point of strand exchange. HJ branch migration catalyzed by RuvA-RuvB allows RuvC to scan DNA until it finds its consensus sequence, where it cleaves and resolves the cruciform DNA. In Pasteurella multocida (strain Pm70), this protein is Crossover junction endodeoxyribonuclease RuvC.